A 249-amino-acid polypeptide reads, in one-letter code: uncharacterized protein (249 aa).

Positions 1–36 (MAKSPARRCTAKVRRVLSRSVLILCWSLLGAAPAHA) are cleaved as a signal peptide. Positions 227 to 249 (ARQPPGRWVCPSSAGGPIGWHRQ) are disordered.

This is an uncharacterized protein from Mycobacterium tuberculosis (strain CDC 1551 / Oshkosh).